The following is a 411-amino-acid chain: Glucose-1-phosphate adenylyltransferase (411 aa).

Residues G164, 179–180 (EK), and S197 each bind alpha-D-glucose 1-phosphate.

It belongs to the bacterial/plant glucose-1-phosphate adenylyltransferase family. Homotetramer.

The catalysed reaction is alpha-D-glucose 1-phosphate + ATP + H(+) = ADP-alpha-D-glucose + diphosphate. The protein operates within glycan biosynthesis; glycogen biosynthesis. Its function is as follows. Involved in the biosynthesis of ADP-glucose, a building block required for the elongation reactions to produce glycogen. Catalyzes the reaction between ATP and alpha-D-glucose 1-phosphate (G1P) to produce pyrophosphate and ADP-Glc. In Corynebacterium kroppenstedtii (strain DSM 44385 / JCM 11950 / CIP 105744 / CCUG 35717), this protein is Glucose-1-phosphate adenylyltransferase.